The chain runs to 165 residues: Cyanate hydratase (165 aa).

Residues 1–20 (MAQNKANTVSQLQSLKNKSG) are disordered. Catalysis depends on residues arginine 90, glutamate 93, and serine 116.

It belongs to the cyanase family.

The enzyme catalyses cyanate + hydrogencarbonate + 3 H(+) = NH4(+) + 2 CO2. Catalyzes the reaction of cyanate with bicarbonate to produce ammonia and carbon dioxide. The polypeptide is Cyanate hydratase (Medicago truncatula (Barrel medic)).